The primary structure comprises 549 residues: Hydroxylamine reductase (549 aa).

C5, C8, C17, and C23 together coordinate [4Fe-4S] cluster. The hybrid [4Fe-2O-2S] cluster site is built by H242, E266, C310, C402, C430, C455, E490, and K492. C402 carries the cysteine persulfide modification.

The protein belongs to the HCP family. [4Fe-4S] cluster serves as cofactor. Requires hybrid [4Fe-2O-2S] cluster as cofactor.

It is found in the cytoplasm. The catalysed reaction is A + NH4(+) + H2O = hydroxylamine + AH2 + H(+). Its function is as follows. Catalyzes the reduction of hydroxylamine to form NH(3) and H(2)O. This chain is Hydroxylamine reductase, found in Clostridium novyi (strain NT).